The chain runs to 89 residues: Small ribosomal subunit protein uS17 (89 aa).

This sequence belongs to the universal ribosomal protein uS17 family. In terms of assembly, part of the 30S ribosomal subunit.

In terms of biological role, one of the primary rRNA binding proteins, it binds specifically to the 5'-end of 16S ribosomal RNA. This Bdellovibrio bacteriovorus (strain ATCC 15356 / DSM 50701 / NCIMB 9529 / HD100) protein is Small ribosomal subunit protein uS17.